The primary structure comprises 89 residues: CRISPR-associated endoribonuclease Cas2 2 (89 aa).

Aspartate 9 is a Mg(2+) binding site.

Belongs to the CRISPR-associated endoribonuclease Cas2 protein family. As to quaternary structure, homodimer, forms a heterotetramer with a Cas1 homodimer. Mg(2+) serves as cofactor.

CRISPR (clustered regularly interspaced short palindromic repeat), is an adaptive immune system that provides protection against mobile genetic elements (viruses, transposable elements and conjugative plasmids). CRISPR clusters contain sequences complementary to antecedent mobile elements and target invading nucleic acids. CRISPR clusters are transcribed and processed into CRISPR RNA (crRNA). Functions as a ssRNA-specific endoribonuclease. Involved in the integration of spacer DNA into the CRISPR cassette. In Methanospirillum hungatei JF-1 (strain ATCC 27890 / DSM 864 / NBRC 100397 / JF-1), this protein is CRISPR-associated endoribonuclease Cas2 2.